Here is an 824-residue protein sequence, read N- to C-terminus: Lysine-specific histone demethylase 1B homolog (824 aa).

Residues 1-31 are disordered; it reads MTTELEIDDRKEEEAQIPGETSESEEGDEPV. Residues 245-346 enclose the SWIRM domain; sequence PFTDVIANIV…YGAFDFRIDP (102 aa). FAD-binding positions include 352 to 407, Val-579, Glu-788, and 796 to 798; these read PKIA…AQII and QTM.

The protein belongs to the flavin monoamine oxidase family. It depends on FAD as a cofactor. In terms of tissue distribution, in hermaphrodites, expressed in gut cells, embryonic cells and sheath cells. Not expressed in sperm or pharyngeal neurons.

Its subcellular location is the nucleus. It catalyses the reaction N(6),N(6)-dimethyl-L-lysyl(4)-[histone H3] + 2 A + 2 H2O = L-lysyl(4)-[histone H3] + 2 formaldehyde + 2 AH2. Its function is as follows. Histone demethylase that demethylates di-methylated 'Lys-4' of histone H3, a specific tag for epigenetic transcriptional activation, thereby acting as a corepressor. Acts by oxidizing the substrate by FAD to generate the corresponding imine that is subsequently hydrolyzed. Plays a role in the mitotic development of the germline. May be involved in H3 demethylation in mitotic cells including gut and embryonic cells. Plays a role in sensitivity upon interstrand cross-link DNA damage, probably by positively regulating the expression of mlh-1. Plays a role in developmental growth and lifespan regulation in response to ultraviolet-induced damage. No obvious role in larval development, sex chromosome segregation or for regulating meiotic crossover frequency. In Caenorhabditis elegans, this protein is Lysine-specific histone demethylase 1B homolog.